A 401-amino-acid polypeptide reads, in one-letter code: Probable peptidoglycan glycosyltransferase FtsW (401 aa).

The Cytoplasmic segment spans residues Met1–Arg26. A helical transmembrane segment spans residues Leu27–Val47. The Periplasmic segment spans residues Ser48–Ala65. Residues Val66–Phe86 form a helical membrane-spanning segment. The Cytoplasmic segment spans residues Tyr87–Arg88. A helical transmembrane segment spans residues Gly89–Val109. At Gly110 to Arg118 the chain is on the periplasmic side. A helical membrane pass occupies residues Trp119–Ile139. The Cytoplasmic segment spans residues Tyr140 to Asn154. A helical transmembrane segment spans residues Thr155 to Ala175. Residues Gln176–Gly180 are Periplasmic-facing. A helical transmembrane segment spans residues Thr181–Trp201. Position 202 (Arg202) is a topological domain, cytoplasmic. A helical transmembrane segment spans residues Ile203 to Tyr223. At Arg224–Asp278 the chain is on the periplasmic side. A helical transmembrane segment spans residues Phe279–Leu299. The Cytoplasmic portion of the chain corresponds to Phe300 to Gly322. Residues Ala323–Val343 traverse the membrane as a helical segment. Over Thr344 to Thr354 the chain is Periplasmic. The chain crosses the membrane as a helical span at residues Leu355–Leu375. Residues Leu376–Pro401 are Cytoplasmic-facing.

It belongs to the SEDS family. FtsW subfamily.

It is found in the cell inner membrane. It catalyses the reaction [GlcNAc-(1-&gt;4)-Mur2Ac(oyl-L-Ala-gamma-D-Glu-L-Lys-D-Ala-D-Ala)](n)-di-trans,octa-cis-undecaprenyl diphosphate + beta-D-GlcNAc-(1-&gt;4)-Mur2Ac(oyl-L-Ala-gamma-D-Glu-L-Lys-D-Ala-D-Ala)-di-trans,octa-cis-undecaprenyl diphosphate = [GlcNAc-(1-&gt;4)-Mur2Ac(oyl-L-Ala-gamma-D-Glu-L-Lys-D-Ala-D-Ala)](n+1)-di-trans,octa-cis-undecaprenyl diphosphate + di-trans,octa-cis-undecaprenyl diphosphate + H(+). It functions in the pathway cell wall biogenesis; peptidoglycan biosynthesis. Functionally, peptidoglycan polymerase that is essential for cell division. This is Probable peptidoglycan glycosyltransferase FtsW from Alkalilimnicola ehrlichii (strain ATCC BAA-1101 / DSM 17681 / MLHE-1).